A 94-amino-acid polypeptide reads, in one-letter code: ESAT-6-like protein EsxI (94 aa).

The protein belongs to the WXG100 family. ESAT-6 subfamily.

The protein resides in the secreted. The sequence is that of ESAT-6-like protein EsxI from Mycobacterium tuberculosis (strain ATCC 25618 / H37Rv).